The sequence spans 218 residues: Pyridoxine/pyridoxamine 5'-phosphate oxidase (218 aa).

Substrate is bound by residues 12-15 (RLSY) and Arg-70. FMN is bound by residues 65-70 (RTVLLR), 80-81 (YT), Lys-87, and Gln-109. Substrate contacts are provided by Tyr-127, Arg-131, and Ser-135. FMN is bound by residues 145–146 (QS) and Trp-191. 197 to 199 (RLH) lines the substrate pocket. Residue Arg-201 participates in FMN binding.

This sequence belongs to the pyridoxamine 5'-phosphate oxidase family. In terms of assembly, homodimer. It depends on FMN as a cofactor.

The enzyme catalyses pyridoxamine 5'-phosphate + O2 + H2O = pyridoxal 5'-phosphate + H2O2 + NH4(+). The catalysed reaction is pyridoxine 5'-phosphate + O2 = pyridoxal 5'-phosphate + H2O2. It participates in cofactor metabolism; pyridoxal 5'-phosphate salvage; pyridoxal 5'-phosphate from pyridoxamine 5'-phosphate: step 1/1. Its pathway is cofactor metabolism; pyridoxal 5'-phosphate salvage; pyridoxal 5'-phosphate from pyridoxine 5'-phosphate: step 1/1. Catalyzes the oxidation of either pyridoxine 5'-phosphate (PNP) or pyridoxamine 5'-phosphate (PMP) into pyridoxal 5'-phosphate (PLP). The chain is Pyridoxine/pyridoxamine 5'-phosphate oxidase from Acinetobacter baumannii (strain AB0057).